The sequence spans 603 residues: Probable GMP synthase [glutamine-hydrolyzing] (603 aa).

A Glutamine amidotransferase type-1 domain is found at 6 to 195 (KIAVVDFGGQ…FIQICGVSKT (190 aa)). Catalysis depends on C81, which acts as the Nucleophile. Catalysis depends on residues H170 and E172. The region spanning 196–392 (WGIDQFLKEK…LGLESEWVGR (197 aa)) is the GMPS ATP-PPase domain. Residue 224–230 (SGGVDST) participates in ATP binding.

Homodimer.

The enzyme catalyses XMP + L-glutamine + ATP + H2O = GMP + L-glutamate + AMP + diphosphate + 2 H(+). It participates in purine metabolism; GMP biosynthesis; GMP from XMP (L-Gln route): step 1/1. Its function is as follows. Catalyzes the synthesis of GMP from XMP. This chain is Probable GMP synthase [glutamine-hydrolyzing] (guaA), found in Leptospira interrogans serogroup Icterohaemorrhagiae serovar copenhageni (strain Fiocruz L1-130).